The sequence spans 521 residues: U4/U6 small nuclear ribonucleoprotein Prp4 (521 aa).

Residue K26 is modified to N6-acetyllysine. WD repeat units lie at residues 228-267 (GDDRPISYCHFSPNSKMLATACWSGLCKLWSVPDCNLLHT), 270-317 (GHNT…PVAD), 320-359 (GHTVRVARVMWHPSGRFLGTTCYDRSWRLWDLEAQEEILH), 362-401 (GHSMGVYDIAFHQDGSLAGTGGLDAFGRVWDLRTGRCIMF), 404-443 (GHLKEIYGINFSPNGYHIATGSGDNTCKVWDLRQRRCVYT), 446-486 (AHQN…PLKT), and 489-521 (GHEGKVMGLDISSDGQLIATCSYDRTFKLWMAE).

In terms of assembly, component of the precatalytic spliceosome (spliceosome B complex). Component of the U4/U6-U5 tri-snRNP complex, a building block of the precatalytic spliceosome (spliceosome B complex). The U4/U6-U5 tri-snRNP complex is composed of the U4, U6 and U5 snRNAs and at least PRPF3, PRPF4, PRPF6, PRPF8, PRPF31, SNRNP200, TXNL4A, SNRNP40, SNRPB, SNRPD1, SNRPD2, SNRPD3, SNRPE, SNRPF, SNRPG, DDX23, CD2BP2, PPIH, SNU13, EFTUD2, SART1 and USP39, plus LSM2, LSM3, LSM4, LSM5, LSM6, LSM7 and LSM8. Interacts directly with PRPF18, PPIH and PRPF3. Part of a heteromeric complex containing PPIH, PRPF3 and PRPF4 that is stable in the absence of RNA. Interacts with ERCC6.

The protein resides in the nucleus. It localises to the nucleus speckle. In terms of biological role, plays a role in pre-mRNA splicing as component of the U4/U6-U5 tri-snRNP complex that is involved in spliceosome assembly, and as component of the precatalytic spliceosome (spliceosome B complex). In Pongo abelii (Sumatran orangutan), this protein is U4/U6 small nuclear ribonucleoprotein Prp4 (PRPF4).